Consider the following 369-residue polypeptide: Peptide chain release factor 2 (369 aa).

At Gln249 the chain carries N5-methylglutamine.

The protein belongs to the prokaryotic/mitochondrial release factor family. In terms of processing, methylated by PrmC. Methylation increases the termination efficiency of RF2.

It localises to the cytoplasm. Peptide chain release factor 2 directs the termination of translation in response to the peptide chain termination codons UGA and UAA. The protein is Peptide chain release factor 2 of Thermosipho melanesiensis (strain DSM 12029 / CIP 104789 / BI429).